Here is a 524-residue protein sequence, read N- to C-terminus: Light-independent protochlorophyllide reductase subunit B (524 aa).

Asp-36 contributes to the [4Fe-4S] cluster binding site. Residue Asp-290 is the Proton donor of the active site. Residue 425 to 426 (GL) participates in substrate binding.

This sequence belongs to the ChlB/BchB/BchZ family. In terms of assembly, protochlorophyllide reductase is composed of three subunits; ChlL, ChlN and ChlB. Forms a heterotetramer of two ChlB and two ChlN subunits. Requires [4Fe-4S] cluster as cofactor.

It catalyses the reaction chlorophyllide a + oxidized 2[4Fe-4S]-[ferredoxin] + 2 ADP + 2 phosphate = protochlorophyllide a + reduced 2[4Fe-4S]-[ferredoxin] + 2 ATP + 2 H2O. It participates in porphyrin-containing compound metabolism; chlorophyll biosynthesis (light-independent). Functionally, component of the dark-operative protochlorophyllide reductase (DPOR) that uses Mg-ATP and reduced ferredoxin to reduce ring D of protochlorophyllide (Pchlide) to form chlorophyllide a (Chlide). This reaction is light-independent. The NB-protein (ChlN-ChlB) is the catalytic component of the complex. This chain is Light-independent protochlorophyllide reductase subunit B, found in Parasynechococcus marenigrum (strain WH8102).